An 86-amino-acid chain; its full sequence is Small ribosomal subunit protein bS20 (86 aa).

This sequence belongs to the bacterial ribosomal protein bS20 family.

Binds directly to 16S ribosomal RNA. This chain is Small ribosomal subunit protein bS20, found in Pseudarthrobacter chlorophenolicus (strain ATCC 700700 / DSM 12829 / CIP 107037 / JCM 12360 / KCTC 9906 / NCIMB 13794 / A6) (Arthrobacter chlorophenolicus).